We begin with the raw amino-acid sequence, 138 residues long: Small ribosomal subunit protein uS11c (138 aa).

Residues M1–R23 are disordered. A compositionally biased stretch (basic residues) spans G9–R23.

The protein belongs to the universal ribosomal protein uS11 family. Part of the 30S ribosomal subunit.

It is found in the plastid. The protein localises to the chloroplast. The chain is Small ribosomal subunit protein uS11c from Barbarea verna (Land cress).